A 176-amino-acid chain; its full sequence is ATP synthase subunit b (176 aa).

The chain crosses the membrane as a helical span at residues 18–38 (GVEWGTVIVTVITFAILLALL).

The protein belongs to the ATPase B chain family. As to quaternary structure, F-type ATPases have 2 components, F(1) - the catalytic core - and F(0) - the membrane proton channel. F(1) has five subunits: alpha(3), beta(3), gamma(1), delta(1), epsilon(1). F(0) has three main subunits: a(1), b(2) and c(10-14). The alpha and beta chains form an alternating ring which encloses part of the gamma chain. F(1) is attached to F(0) by a central stalk formed by the gamma and epsilon chains, while a peripheral stalk is formed by the delta and b chains.

It localises to the cell membrane. Functionally, f(1)F(0) ATP synthase produces ATP from ADP in the presence of a proton or sodium gradient. F-type ATPases consist of two structural domains, F(1) containing the extramembraneous catalytic core and F(0) containing the membrane proton channel, linked together by a central stalk and a peripheral stalk. During catalysis, ATP synthesis in the catalytic domain of F(1) is coupled via a rotary mechanism of the central stalk subunits to proton translocation. Its function is as follows. Component of the F(0) channel, it forms part of the peripheral stalk, linking F(1) to F(0). The protein is ATP synthase subunit b of Staphylococcus haemolyticus (strain JCSC1435).